A 318-amino-acid polypeptide reads, in one-letter code: Beta-ketoacyl-[acyl-carrier-protein] synthase III (318 aa).

Residues cysteine 112 and histidine 245 contribute to the active site. The tract at residues 246–250 (QANLR) is ACP-binding. Residue asparagine 275 is part of the active site.

It belongs to the thiolase-like superfamily. FabH family. In terms of assembly, homodimer.

It localises to the cytoplasm. The enzyme catalyses malonyl-[ACP] + acetyl-CoA + H(+) = 3-oxobutanoyl-[ACP] + CO2 + CoA. Its pathway is lipid metabolism; fatty acid biosynthesis. Functionally, catalyzes the condensation reaction of fatty acid synthesis by the addition to an acyl acceptor of two carbons from malonyl-ACP. Catalyzes the first condensation reaction which initiates fatty acid synthesis and may therefore play a role in governing the total rate of fatty acid production. Possesses both acetoacetyl-ACP synthase and acetyl transacylase activities. Its substrate specificity determines the biosynthesis of branched-chain and/or straight-chain of fatty acids. The sequence is that of Beta-ketoacyl-[acyl-carrier-protein] synthase III from Blochmanniella floridana.